A 498-amino-acid chain; its full sequence is Galactose-1-phosphate uridylyltransferase (498 aa).

This sequence belongs to the galactose-1-phosphate uridylyltransferase type 2 family.

It is found in the cytoplasm. It catalyses the reaction alpha-D-galactose 1-phosphate + UDP-alpha-D-glucose = alpha-D-glucose 1-phosphate + UDP-alpha-D-galactose. The protein operates within carbohydrate metabolism; galactose metabolism. The protein is Galactose-1-phosphate uridylyltransferase of Clostridium perfringens (strain SM101 / Type A).